Here is a 367-residue protein sequence, read N- to C-terminus: DNA replication and repair protein RecF (367 aa).

Residue 30-37 participates in ATP binding; it reads GANGSGKT.

The protein belongs to the RecF family.

The protein localises to the cytoplasm. Its function is as follows. The RecF protein is involved in DNA metabolism; it is required for DNA replication and normal SOS inducibility. RecF binds preferentially to single-stranded, linear DNA. It also seems to bind ATP. The polypeptide is DNA replication and repair protein RecF (Pseudomonas syringae pv. syringae (strain B728a)).